We begin with the raw amino-acid sequence, 741 residues long: NAD(P)H-quinone oxidoreductase subunit 5, chloroplastic (741 aa).

16 consecutive transmembrane segments (helical) span residues Trp-9–Phe-29, Trp-40–Ile-60, Ile-89–Ile-109, Phe-125–Ile-145, Ile-147–Thr-167, Gly-185–Phe-205, Asn-219–Ala-239, Thr-258–Ala-278, Leu-283–Phe-303, Leu-327–Ile-347, Ala-354–Cys-374, Asn-396–Ser-416, Trp-425–Tyr-445, Leu-549–Phe-569, Phe-605–Val-625, and Tyr-721–Leu-741.

It belongs to the complex I subunit 5 family. As to quaternary structure, NDH is composed of at least 16 different subunits, 5 of which are encoded in the nucleus.

The protein resides in the plastid. The protein localises to the chloroplast thylakoid membrane. The enzyme catalyses a plastoquinone + NADH + (n+1) H(+)(in) = a plastoquinol + NAD(+) + n H(+)(out). It catalyses the reaction a plastoquinone + NADPH + (n+1) H(+)(in) = a plastoquinol + NADP(+) + n H(+)(out). Functionally, NDH shuttles electrons from NAD(P)H:plastoquinone, via FMN and iron-sulfur (Fe-S) centers, to quinones in the photosynthetic chain and possibly in a chloroplast respiratory chain. The immediate electron acceptor for the enzyme in this species is believed to be plastoquinone. Couples the redox reaction to proton translocation, and thus conserves the redox energy in a proton gradient. The sequence is that of NAD(P)H-quinone oxidoreductase subunit 5, chloroplastic (ndhF) from Cichorium intybus (Chicory).